The following is a 915-amino-acid chain: Mitogen-activated protein kinase kinae kinase MST11 (915 aa).

Disordered regions lie at residues 1-65 (MAML…PKHW), 134-171 (KKRNRDSFAGHESMYTPVSESPSKPFHSSSRVMPNPSV), and 183-249 (GMAY…TRTD). Over residues 26–45 (AQASYPPSRRAPAVPPASQS) the composition is skewed to low complexity. Residues 65–128 (WDEDKVCEYL…FLSIKKLRTK (64 aa)) form the SAM domain. Composition is skewed to low complexity over residues 152 to 163 (SESPSKPFHSSS) and 188 to 203 (PSRPTTSSRPTSPLPS). The Ras-associating domain maps to 263–353 (NQDVIRVIST…NRLILRRVPA (91 aa)). A Protein kinase domain is found at 641–911 (WMKGALIGQG…ADDLMLSPFL (271 aa)). Residues 647–655 (IGQGSFGCV) and Lys-670 each bind ATP.

Belongs to the protein kinase superfamily. STE Ser/Thr protein kinase family. MAP kinase kinase kinase subfamily. As to quaternary structure, interacts with the adapter protein MST50.

It catalyses the reaction L-seryl-[protein] + ATP = O-phospho-L-seryl-[protein] + ADP + H(+). The catalysed reaction is L-threonyl-[protein] + ATP = O-phospho-L-threonyl-[protein] + ADP + H(+). Functionally, mitogen-activated protein kinase kinase kinase; part of the MST11-MST7-PMK1 MAP kinase (MAPK) cascade that is essential for appressorium formation, penetration and invasive growth. The MST11-MST7-PMK1 MAP kinase cascade transduces signals from the cell surface sensors MDB2 and SHO1 that recognize various surface signals such as surface hydrophobicity, cutin monomers, and rice leaf waxes. MST11 acts as the upstream MAPKKK that directly phosphorylates MAPKK MST7. MST11 but not MST7 may also be involved in the OSM1 MAPK pathway in response to osmotic stresses. The sequence is that of Mitogen-activated protein kinase kinae kinase MST11 from Pyricularia oryzae (strain 70-15 / ATCC MYA-4617 / FGSC 8958) (Rice blast fungus).